Here is a 117-residue protein sequence, read N- to C-terminus: Ribonuclease P protein component 4 (117 aa).

C64, C67, C93, and C96 together coordinate Zn(2+).

This sequence belongs to the eukaryotic/archaeal RNase P protein component 4 family. As to quaternary structure, consists of a catalytic RNA component and at least 4-5 protein subunits. The cofactor is Zn(2+).

The protein resides in the cytoplasm. The enzyme catalyses Endonucleolytic cleavage of RNA, removing 5'-extranucleotides from tRNA precursor.. Functionally, part of ribonuclease P, a protein complex that generates mature tRNA molecules by cleaving their 5'-ends. This Pyrococcus abyssi (strain GE5 / Orsay) protein is Ribonuclease P protein component 4.